Consider the following 47-residue polypeptide: Protein YqgG (47 aa).

This chain is Protein YqgG, found in Escherichia coli (strain K12).